Reading from the N-terminus, the 598-residue chain is Leucine aminopeptidase 2, chloroplastic (598 aa).

Residues 1-71 (MATAASTSAA…GHRARMGHTA (71 aa)) constitute a chloroplast transit peptide. Residues Lys-367 and Asp-372 each contribute to the Mn(2+) site. Residue Lys-379 is part of the active site. Residues Asp-392, Asp-452, and Glu-454 each coordinate Mn(2+). The active site involves Arg-456.

Belongs to the peptidase M17 family. In terms of assembly, homohexamer (dimer of homotrimers). It depends on Mn(2+) as a cofactor.

The protein localises to the plastid. The protein resides in the chloroplast. The catalysed reaction is Release of an N-terminal amino acid, Xaa-|-Yaa-, in which Xaa is preferably Leu, but may be other amino acids including Pro although not Arg or Lys, and Yaa may be Pro. Amino acid amides and methyl esters are also readily hydrolyzed, but rates on arylamides are exceedingly low.. It carries out the reaction Release of N-terminal proline from a peptide.. In terms of biological role, presumably involved in the processing and regular turnover of intracellular proteins. Catalyzes the removal of unsubstituted N-terminal amino acids from various peptides. This Oryza sativa subsp. japonica (Rice) protein is Leucine aminopeptidase 2, chloroplastic.